The sequence spans 277 residues: MKIPSIGYVFFLIFISITIVSSSPDHGEVEDETQFNYEKKGEKGPENWGRLKPEWAMCGKGNMQSPIDLTDKRVLIDHNLGYLRSQYLPSNATIKNRGHDIMMKFEGGNAGLGITINGTEYKLQQIHWHSPSEHTLNGKRFVLEEHMVHQSKDGRNAVVAFFYKLGKPDYFLLTLERYLKRITDTHESQEFVEMVHPRTFGFESKHYYRFIGSLTTPPCSENVIWTISKEMRTVTLKQLIMLRVTVHDQSNSNARPLQRKNERPVALYIPTWHSKLY.

The N-terminal stretch at 1-22 (MKIPSIGYVFFLIFISITIVSS) is a signal peptide. An Alpha-carbonic anhydrase domain is found at 33 to 269 (TQFNYEKKGE…KNERPVALYI (237 aa)). Cys-58 and Cys-219 form a disulfide bridge. Asn-91 carries N-linked (GlcNAc...) asparagine glycosylation. The active-site Proton acceptor is the His-99. N-linked (GlcNAc...) asparagine glycosylation is present at Asn-117. Zn(2+)-binding residues include His-127, His-129, and His-146. Residue 215–216 (TT) coordinates substrate.

It belongs to the alpha-class carbonic anhydrase family. It depends on Zn(2+) as a cofactor. N-glycosylated.

Its subcellular location is the plastid. It localises to the chloroplast stroma. It catalyses the reaction hydrogencarbonate + H(+) = CO2 + H2O. Functionally, reversible hydration of carbon dioxide. This chain is Alpha carbonic anhydrase 5 (ACA5), found in Arabidopsis thaliana (Mouse-ear cress).